Here is a 358-residue protein sequence, read N- to C-terminus: Peptide chain release factor 1 (358 aa).

Q235 bears the N5-methylglutamine mark.

This sequence belongs to the prokaryotic/mitochondrial release factor family. Post-translationally, methylated by PrmC. Methylation increases the termination efficiency of RF1.

The protein localises to the cytoplasm. Peptide chain release factor 1 directs the termination of translation in response to the peptide chain termination codons UAG and UAA. The sequence is that of Peptide chain release factor 1 from Nitrosospira multiformis (strain ATCC 25196 / NCIMB 11849 / C 71).